The sequence spans 286 residues: Polyamine aminopropyltransferase (286 aa).

In terms of domain architecture, PABS spans 5–238 (TMWHETLHDQ…GIMTFAWATD (234 aa)). Residue Q33 participates in S-methyl-5'-thioadenosine binding. 2 residues coordinate spermidine: H64 and D88. Residues E108 and 140–141 (DG) each bind S-methyl-5'-thioadenosine. The active-site Proton acceptor is D158. Residue 158–161 (DCTD) participates in spermidine binding. Residue P165 participates in S-methyl-5'-thioadenosine binding.

It belongs to the spermidine/spermine synthase family. As to quaternary structure, homodimer or homotetramer.

The protein localises to the cytoplasm. It catalyses the reaction S-adenosyl 3-(methylsulfanyl)propylamine + putrescine = S-methyl-5'-thioadenosine + spermidine + H(+). It functions in the pathway amine and polyamine biosynthesis; spermidine biosynthesis; spermidine from putrescine: step 1/1. In terms of biological role, catalyzes the irreversible transfer of a propylamine group from the amino donor S-adenosylmethioninamine (decarboxy-AdoMet) to putrescine (1,4-diaminobutane) to yield spermidine. This Salmonella paratyphi A (strain ATCC 9150 / SARB42) protein is Polyamine aminopropyltransferase.